Reading from the N-terminus, the 303-residue chain is Growth/differentiation factor 15 (303 aa).

Residues 1 to 30 form the signal peptide; that stretch reads MALRALHAQPTGGPQLRFLLFLLLLLLLLS. Residues 31 to 188 constitute a propeptide that is removed on maturation; the sequence is WPSQGDALAL…LRSAAGRGRR (158 aa). An N-linked (GlcNAc...) asparagine glycan is attached at asparagine 71. 4 disulfides stabilise this stretch: cysteine 198–cysteine 205, cysteine 206–cysteine 269, cysteine 235–cysteine 300, and cysteine 239–cysteine 302.

It belongs to the TGF-beta family. In terms of assembly, homodimer; disulfide-linked. Interacts with GFRAL and RET; ligand of GFRAL, which mediates GDF15 internalization and cellular signaling through interaction with RET via the formation of a 2:2:2 ternary complex composed of GDF15, GFRAL and RET. As to expression, detected in plasma (at protein level).

The protein resides in the secreted. In terms of biological role, hormone produced in response to various stresses to confer information about those stresses to the brain, and trigger an aversive response, characterized by nausea and/or loss of appetite. The aversive response is both required to reduce continuing exposure to those stresses at the time of exposure and to promote avoidance behavior in the future. Acts by binding to its receptor, GFRAL, activating GFRAL-expressing neurons localized in the area postrema and nucleus tractus solitarius of the brainstem. It then triggers the activation of neurons localized within the parabrachial nucleus and central amygdala, which constitutes part of the 'emergency circuit' that shapes responses to stressful conditions. The GDF15-GFRAL signal induces expression of genes involved in metabolism, such as lipid metabolism in adipose tissues. Contributes to the effect of metformin, an anti-diabetic drug, on appetite reduction and weight loss: produced in the kidney in response to metformin treatment, thereby activating the GDF15-GFRAL response, leading to reduced appetite and weight. Required for avoidance behavior in response to food allergens: induced downstream of mast cell activation to promote aversion and minimize harmful effects of exposure to noxious substances. Produced in response to anticancer drugs, such as camptothecin or cisplatin, promoting nausea and contributing to malnutrition. Overproduced in many cancers, promoting anorexia in cancer (cachexia). Responsible for the risk of nausea during pregnancy: high levels of GDF15 during pregnancy, mostly originating from embryos, are associated with increased nausea. Maternal sensitivity to nausea is probably determined by pre-pregnancy exposure to GDF15, females with naturally high level of GDF15 being less susceptible to nausea than female rats with low levels of GDF15 before pregnancy. Promotes metabolic adaptation in response to systemic inflammation caused by bacterial and viral infections in order to promote tissue tolerance and prevent tissue damage. Required for tissue tolerance in response to myocardial infarction by acting as an inhibitor of leukocyte integring activation, thereby protecting against cardiac rupture. Inhibits growth hormone signaling on hepatocytes. The sequence is that of Growth/differentiation factor 15 from Rattus norvegicus (Rat).